The sequence spans 661 residues: Kyphoscoliosis peptidase (661 aa).

The disordered stretch occupies residues 116 to 137 (GDKNGNMRPRQPGGKDAHAYPW). Active-site residues include Cys-225, His-267, and Asp-282.

Belongs to the transglutaminase-like superfamily. Interacts with IGFN1 and FLNC. In terms of tissue distribution, specifically expressed in skeletal and cardiac muscle.

The protein resides in the cytoplasm. It localises to the cytoskeleton. It is found in the myofibril. The protein localises to the sarcomere. Its subcellular location is the z line. In terms of biological role, probable cytoskeleton-associated protease required for normal muscle growth. Involved in function, maturation and stabilization of the neuromuscular junction. May act by cleaving muscle-specific proteins such as FLNC. This Mus musculus (Mouse) protein is Kyphoscoliosis peptidase.